Consider the following 254-residue polypeptide: 5-oxoprolinase subunit A (254 aa).

It belongs to the LamB/PxpA family. Forms a complex composed of PxpA, PxpB and PxpC.

It catalyses the reaction 5-oxo-L-proline + ATP + 2 H2O = L-glutamate + ADP + phosphate + H(+). In terms of biological role, catalyzes the cleavage of 5-oxoproline to form L-glutamate coupled to the hydrolysis of ATP to ADP and inorganic phosphate. The polypeptide is 5-oxoprolinase subunit A (Acinetobacter baylyi (strain ATCC 33305 / BD413 / ADP1)).